The sequence spans 236 residues: Bacterial rhodopsin CSR3 (236 aa).

Over 1–3 (MDA) the chain is Extracellular. A helical transmembrane segment spans residues 4–25 (VAVVYGITAAGFAVGVAIVGYL). The Cytoplasmic portion of the chain corresponds to 26-34 (YASLEGSEE). A helical membrane pass occupies residues 35-56 (RSILAALALIPGFAGISYVAMA). Over 57–70 (FGIGTVTIGETTLV) the chain is Extracellular. A helical transmembrane segment spans residues 71–92 (GFRYLDWVVTTPLLVGFVGYAA). At 93 to 95 (GAS) the chain is on the cytoplasmic side. A helical membrane pass occupies residues 96-118 (RRAIFGVMVADALMILTGVGAVV). Topologically, residues 119–122 (ADGT) are extracellular. Residues 123–150 (LKWVLFGVSTVFHVSLFAYLYLVFPRSV) traverse the membrane as a helical segment. Residues 151–153 (PDD) lie on the Cytoplasmic side of the membrane. The helical transmembrane segment at 154–181 (PQRIGLFSLLKNHIGLLWIAYPLVWLAG) threads the bilayer. Residues 182-189 (PEGLGLAT) lie on the Extracellular side of the membrane. A helical transmembrane segment spans residues 190–222 (YVGVSITYAFLDLLAKVPYVYFFYARRQVFATK). An N6-(retinylidene)lysine modification is found at Lys205. Residues 223–236 (LLRDSGEVTATPAD) are Cytoplasmic-facing.

Belongs to the archaeal/bacterial/fungal opsin family.

It localises to the cell membrane. This Haloarcula vallismortis (Halobacterium vallismortis) protein is Bacterial rhodopsin CSR3.